Here is a 421-residue protein sequence, read N- to C-terminus: 3-phosphoshikimate 1-carboxyvinyltransferase (421 aa).

Positions 21, 22, and 26 each coordinate 3-phosphoshikimate. Position 21 (K21) interacts with phosphoenolpyruvate. The phosphoenolpyruvate site is built by G93 and R121. 3-phosphoshikimate contacts are provided by S166, S167, Q168, S194, D310, and K337. Phosphoenolpyruvate is bound at residue Q168. D310 serves as the catalytic Proton acceptor. Phosphoenolpyruvate is bound by residues R341, R382, and K407.

It belongs to the EPSP synthase family. As to quaternary structure, monomer.

Its subcellular location is the cytoplasm. It carries out the reaction 3-phosphoshikimate + phosphoenolpyruvate = 5-O-(1-carboxyvinyl)-3-phosphoshikimate + phosphate. The protein operates within metabolic intermediate biosynthesis; chorismate biosynthesis. In terms of biological role, catalyzes the transfer of the enolpyruvyl moiety of phosphoenolpyruvate (PEP) to the 5-hydroxyl of shikimate-3-phosphate (S3P) to produce enolpyruvyl shikimate-3-phosphate and inorganic phosphate. This chain is 3-phosphoshikimate 1-carboxyvinyltransferase, found in Methanoregula boonei (strain DSM 21154 / JCM 14090 / 6A8).